The chain runs to 510 residues: Scarecrow-like protein 29 (510 aa).

The segment at 90–142 is disordered; the sequence is LDLPPEIQQPNDQSRKRSHDGFLEAQQVKKSARSKRKAIKSSEKSSKDGNKEG. The span at 102–111 shows a compositional bias: basic and acidic residues; it reads QSRKRSHDGF. A compositionally biased stretch (basic residues) spans 119 to 128; it reads KSARSKRKAI. Positions 129 to 142 are enriched in basic and acidic residues; that stretch reads KSSEKSSKDGNKEG. A GRAS domain is found at 136 to 510; the sequence is KDGNKEGRWA…EAVSFCSLWK (375 aa). The tract at residues 143–205 is leucine repeat I (LRI); it reads RWAEKLLNPC…HLSSSSVSSS (63 aa). The VHIID stretch occupies residues 224 to 294; sequence LLKFYEVSPW…GPPPRVRITV (71 aa). The VHIID motif lies at 259–263; sequence LHIID. The segment at 312-337 is leucine repeat II (LRII); it reads NYGSQLLGFARSLKINLQISVLDKLQ. The PFYRE stretch occupies residues 347 to 435; sequence LIVCAQFRLH…RKLMEGEATK (89 aa). The interval 438 to 510 is SAW; sequence MNAGDMNEGK…EAVSFCSLWK (73 aa).

The protein belongs to the GRAS family. In terms of tissue distribution, expressed in seedlings, roots and flowers.

The protein localises to the nucleus. Its function is as follows. Probable transcription factor involved in plant development. The protein is Scarecrow-like protein 29 (SCL29) of Arabidopsis thaliana (Mouse-ear cress).